Reading from the N-terminus, the 306-residue chain is MSVRDLTILGCSSQQPTRFRNHGAYLLRWNGEGFLFDPGEGTQRQFIFANIAPSVINRIFISHFHGDHCLGLGSILMRLNLDKVRHPIHCYYPASGKKYFDRLRYGTIYHEMIHVVEHPVSKAGLVEDDGRFKIEAAFLQHGIENIGWRITEADTRKFDNQKLIDRGIRGSLVKELQEKGQLNLDGQTIYLDDVSWIRKGDQFSVVIDTLPCQNAIDIARNATLLLCESTYLEEHKELARLHSHLTAKQAALIAKEANAKQLILTHFSARYQNLKLFEQEARTIFANTFVANDLITFPFTKVNLKS.

7 residues coordinate Zn(2+): H63, H65, D67, H68, H141, D208, and H266. The active-site Proton acceptor is the D67.

Belongs to the RNase Z family. Homodimer. Zn(2+) serves as cofactor.

The catalysed reaction is Endonucleolytic cleavage of RNA, removing extra 3' nucleotides from tRNA precursor, generating 3' termini of tRNAs. A 3'-hydroxy group is left at the tRNA terminus and a 5'-phosphoryl group is left at the trailer molecule.. In terms of biological role, zinc phosphodiesterase, which displays some tRNA 3'-processing endonuclease activity. Probably involved in tRNA maturation, by removing a 3'-trailer from precursor tRNA. The sequence is that of Ribonuclease Z from Protochlamydia amoebophila (strain UWE25).